The primary structure comprises 106 residues: UPF0145 protein BH0643 (106 aa).

The protein belongs to the UPF0145 family.

This is UPF0145 protein BH0643 from Halalkalibacterium halodurans (strain ATCC BAA-125 / DSM 18197 / FERM 7344 / JCM 9153 / C-125) (Bacillus halodurans).